A 493-amino-acid chain; its full sequence is 3-octaprenyl-4-hydroxybenzoate carboxy-lyase (493 aa).

Residue N175 coordinates Mn(2+). Residues 178–180 (IYR), 192–194 (RWL), and 197–198 (RG) contribute to the prenylated FMN site. E241 lines the Mn(2+) pocket. Catalysis depends on D290, which acts as the Proton donor.

The protein belongs to the UbiD family. As to quaternary structure, homohexamer. It depends on prenylated FMN as a cofactor. Requires Mn(2+) as cofactor.

It localises to the cell membrane. The enzyme catalyses a 4-hydroxy-3-(all-trans-polyprenyl)benzoate + H(+) = a 2-(all-trans-polyprenyl)phenol + CO2. The protein operates within cofactor biosynthesis; ubiquinone biosynthesis. Catalyzes the decarboxylation of 3-octaprenyl-4-hydroxy benzoate to 2-octaprenylphenol, an intermediate step in ubiquinone biosynthesis. This chain is 3-octaprenyl-4-hydroxybenzoate carboxy-lyase, found in Photorhabdus laumondii subsp. laumondii (strain DSM 15139 / CIP 105565 / TT01) (Photorhabdus luminescens subsp. laumondii).